We begin with the raw amino-acid sequence, 444 residues long: MGRLFGTDGVRGVANRELTAELALALGAAAARQLASGSAPGRRVAVIGRDPRASGEMLEAAVIAGLTSQGVDALRVGVLPTPAVAYLTGAYDADFGVMISASHNPMPDNGIKIFGPGGHKLDDGTEDRIEALVGDAGPRPVGAGIGRVIDAEDAADRYLRHLSKASTLRLDGLTVVVDCAHGAASAVAPRAYRAAGARVIAINADPNGLNINDNCGSTHLDSLRAAVVAHRADLGLAHDGDADRCLAVDADGNLVDGDHIMVVLALAMREAGELASDTLVTTVMSNLGLHLAMRSAGITVRTTGVGDRYVVEELRAGDFSLGGEQSGHIVMPALGSTGDGIVTGLRLMTRMAQTGSPLSDLASAMQTLPQVLINVTVADKATAATAPSVQTAVGQAAAELGDTGRILLRPSGTEPMIRVMVEAPEKDIAQRLATRVAEAVSAAR.

The Phosphoserine intermediate role is filled by serine 102. 4 residues coordinate Mg(2+): serine 102, aspartate 239, aspartate 241, and aspartate 243. Serine 102 bears the Phosphoserine mark.

It belongs to the phosphohexose mutase family. Mg(2+) is required as a cofactor. Activated by phosphorylation.

The enzyme catalyses alpha-D-glucosamine 1-phosphate = D-glucosamine 6-phosphate. Functionally, catalyzes the conversion of glucosamine-6-phosphate to glucosamine-1-phosphate. This Mycolicibacterium paratuberculosis (strain ATCC BAA-968 / K-10) (Mycobacterium paratuberculosis) protein is Phosphoglucosamine mutase.